Here is a 206-residue protein sequence, read N- to C-terminus: Isochorismatase domain-containing protein 2A (206 aa).

Residue Lys26 is modified to N6-succinyllysine. Lys93 and Lys178 each carry N6-acetyllysine; alternate. 2 positions are modified to N6-succinyllysine; alternate: Lys93 and Lys178. N6-acetyllysine is present on residues Lys182 and Lys185.

The protein belongs to the isochorismatase family. In terms of assembly, interacts with CDKN2A. As to expression, ubiquitous. Expressed predominantly in uterus, stomach and urinary tract.

Its subcellular location is the cytoplasm. The protein localises to the nucleus. In Mus musculus (Mouse), this protein is Isochorismatase domain-containing protein 2A.